We begin with the raw amino-acid sequence, 477 residues long: UDP-N-acetylmuramate--L-alanine ligase (477 aa).

125 to 131 contacts ATP; that stretch reads GTHGKTT.

It belongs to the MurCDEF family.

It localises to the cytoplasm. It catalyses the reaction UDP-N-acetyl-alpha-D-muramate + L-alanine + ATP = UDP-N-acetyl-alpha-D-muramoyl-L-alanine + ADP + phosphate + H(+). The protein operates within cell wall biogenesis; peptidoglycan biosynthesis. In terms of biological role, cell wall formation. In Acidothermus cellulolyticus (strain ATCC 43068 / DSM 8971 / 11B), this protein is UDP-N-acetylmuramate--L-alanine ligase.